Reading from the N-terminus, the 208-residue chain is Thymidylate kinase (208 aa).

10–17 (GPEGSGKT) contributes to the ATP binding site.

It belongs to the thymidylate kinase family.

The enzyme catalyses dTMP + ATP = dTDP + ADP. In terms of biological role, phosphorylation of dTMP to form dTDP in both de novo and salvage pathways of dTTP synthesis. The polypeptide is Thymidylate kinase (Bacillus anthracis).